The primary structure comprises 331 residues: MAQLFYDTDADLSLLSGKTVAIVGYGSQGHAHALNLKDSGVDVVVGLYEGSRSAEKAKADGLEVLSVAEAAERADWIMVLLPDEFQKDVYAKEIAPHLKAGKVLSFAHGFNIRFGLIKPPADVDVVMIAPKGPGHTVRWEYQNGQGVPALFAIEQDASGNARGLAMAYAKGIGGTRAGILETNFKEETETDLFGEQAVLCGGLSELVKAGFETLVEAGYQPELAYFECLHEVKLIVDLMVKGGLSAMRDSISNTAEYGDYVSGPRLITADTKAEMKRILGDIQDGTFAKNFVAECEAGKPEMNKIREQDRHHKIEEVGKGLRSMFSWLKAS.

A KARI N-terminal Rossmann domain is found at 2–182 (AQLFYDTDAD…GGTRAGILET (181 aa)). NADP(+) is bound by residues 25–28 (YGSQ), Ser51, Ser53, and 83–86 (DEFQ). Residue His108 is part of the active site. Residue Gly134 coordinates NADP(+). The KARI C-terminal knotted domain maps to 183–328 (NFKEETETDL…KGLRSMFSWL (146 aa)). Mg(2+)-binding residues include Asp191, Glu195, Glu227, and Glu231. Ser252 contributes to the substrate binding site.

This sequence belongs to the ketol-acid reductoisomerase family. Mg(2+) serves as cofactor.

It catalyses the reaction (2R)-2,3-dihydroxy-3-methylbutanoate + NADP(+) = (2S)-2-acetolactate + NADPH + H(+). It carries out the reaction (2R,3R)-2,3-dihydroxy-3-methylpentanoate + NADP(+) = (S)-2-ethyl-2-hydroxy-3-oxobutanoate + NADPH + H(+). Its pathway is amino-acid biosynthesis; L-isoleucine biosynthesis; L-isoleucine from 2-oxobutanoate: step 2/4. The protein operates within amino-acid biosynthesis; L-valine biosynthesis; L-valine from pyruvate: step 2/4. Involved in the biosynthesis of branched-chain amino acids (BCAA). Catalyzes an alkyl-migration followed by a ketol-acid reduction of (S)-2-acetolactate (S2AL) to yield (R)-2,3-dihydroxy-isovalerate. In the isomerase reaction, S2AL is rearranged via a Mg-dependent methyl migration to produce 3-hydroxy-3-methyl-2-ketobutyrate (HMKB). In the reductase reaction, this 2-ketoacid undergoes a metal-dependent reduction by NADPH to yield (R)-2,3-dihydroxy-isovalerate. This chain is Ketol-acid reductoisomerase (NADP(+)), found in Synechococcus sp. (strain WH7803).